The primary structure comprises 159 residues: Ribosomal RNA large subunit methyltransferase H (159 aa).

Residues leucine 76, glycine 108, and phenylalanine 127–leucine 132 each bind S-adenosyl-L-methionine.

This sequence belongs to the RNA methyltransferase RlmH family. As to quaternary structure, homodimer.

It localises to the cytoplasm. The catalysed reaction is pseudouridine(1915) in 23S rRNA + S-adenosyl-L-methionine = N(3)-methylpseudouridine(1915) in 23S rRNA + S-adenosyl-L-homocysteine + H(+). Specifically methylates the pseudouridine at position 1915 (m3Psi1915) in 23S rRNA. In Lactococcus lactis subsp. cremoris (strain SK11), this protein is Ribosomal RNA large subunit methyltransferase H.